The sequence spans 596 residues: Elongation factor 4 (596 aa).

Residues 2–184 form the tr-type G domain; that stretch reads SHIRNFSIIA…RLVHTIPAPE (183 aa). Residues 14–19 and 131–134 contribute to the GTP site; these read DHGKST and NKMD.

It belongs to the TRAFAC class translation factor GTPase superfamily. Classic translation factor GTPase family. LepA subfamily.

The protein resides in the cell inner membrane. The catalysed reaction is GTP + H2O = GDP + phosphate + H(+). Required for accurate and efficient protein synthesis under certain stress conditions. May act as a fidelity factor of the translation reaction, by catalyzing a one-codon backward translocation of tRNAs on improperly translocated ribosomes. Back-translocation proceeds from a post-translocation (POST) complex to a pre-translocation (PRE) complex, thus giving elongation factor G a second chance to translocate the tRNAs correctly. Binds to ribosomes in a GTP-dependent manner. The chain is Elongation factor 4 from Pseudomonas putida (strain GB-1).